The following is a 37-amino-acid chain: Large ribosomal subunit protein bL36c (37 aa).

It belongs to the bacterial ribosomal protein bL36 family.

It localises to the plastid. The protein localises to the chloroplast. The polypeptide is Large ribosomal subunit protein bL36c (Pinus koraiensis (Korean pine)).